Reading from the N-terminus, the 779-residue chain is Beta-galactosidase 15 (779 aa).

The first 19 residues, 1 to 19 (MVSLSFILCCVLVSSCAYA), serve as a signal peptide directing secretion. Residue Asn-148 is glycosylated (N-linked (GlcNAc...) asparagine). The active-site Proton donor is the Glu-178. Glu-247 acts as the Nucleophile in catalysis. N-linked (GlcNAc...) asparagine glycans are attached at residues Asn-248, Asn-345, Asn-374, Asn-489, Asn-495, and Asn-555. Residues 694–779 (VYEKNVLELS…AKRLAVEAIC (86 aa)) enclose the SUEL-type lectin domain.

Belongs to the glycosyl hydrolase 35 family. As to expression, ubiquitous, with higher levels in roots and siliques.

It localises to the secreted. The protein localises to the extracellular space. Its subcellular location is the apoplast. The enzyme catalyses Hydrolysis of terminal non-reducing beta-D-galactose residues in beta-D-galactosides.. The sequence is that of Beta-galactosidase 15 (BGAL15) from Arabidopsis thaliana (Mouse-ear cress).